Here is a 253-residue protein sequence, read N- to C-terminus: uncharacterized protein (253 aa).

The protein belongs to the DcsA family.

This is an uncharacterized protein from Bacillus subtilis (strain 168).